Reading from the N-terminus, the 324-residue chain is RING-H2 finger protein ATL3 (324 aa).

The chain crosses the membrane as a helical span at residues isoleucine 24–leucine 44. The RING-type; atypical zinc finger occupies cysteine 127 to arginine 169. 3 disordered regions span residues serine 179–serine 210, valine 226–serine 248, and arginine 299–proline 324. Polar residues-rich tracts occupy residues asparagine 192–serine 210 and valine 226–threonine 235. Residues serine 306 to proline 324 are compositionally biased toward low complexity.

It belongs to the RING-type zinc finger family. ATL subfamily.

It localises to the membrane. The catalysed reaction is S-ubiquitinyl-[E2 ubiquitin-conjugating enzyme]-L-cysteine + [acceptor protein]-L-lysine = [E2 ubiquitin-conjugating enzyme]-L-cysteine + N(6)-ubiquitinyl-[acceptor protein]-L-lysine.. Its pathway is protein modification; protein ubiquitination. This Arabidopsis thaliana (Mouse-ear cress) protein is RING-H2 finger protein ATL3 (ATL3).